Consider the following 461-residue polypeptide: Phosphatidate cytidylyltransferase 1 (461 aa).

Positions 1 to 68 are disordered; the sequence is MLELRHRGGC…PEVPPSSDRT (68 aa). Arginine 7 is subject to Omega-N-methylarginine. A compositionally biased stretch (basic and acidic residues) spans 22-56; it reads REGEAAGGDHETESTSDKETDIDDRYGDLDARGDS. 2 positions are modified to phosphoserine: serine 35 and serine 37. The next 6 helical transmembrane spans lie at 96-116, 149-169, 183-203, 230-250, 279-299, and 357-377; these read MISLFFLIIYMGSFMLMLLVL, FLLCVNYFFYGETVADYFATF, HRFISFALYLAGFCMFVLSLV, LVIQNLFEGMIWFLVPISSVI, GFIGGFFSTVIFGFIAAYVLS, and IALSTFASLIGPFGGFFASGF.

This sequence belongs to the CDS family. As to quaternary structure, homodimer. Interacts with FOS; this interaction may enhance catalytic activity. Mg(2+) is required as a cofactor. In terms of tissue distribution, expressed in adult brain, eye, smooth muscle and testis. Highly expressed in the inner segment of the photoreceptor layer of adult retina.

The protein localises to the endoplasmic reticulum membrane. The catalysed reaction is a 1,2-diacyl-sn-glycero-3-phosphate + CTP + H(+) = a CDP-1,2-diacyl-sn-glycerol + diphosphate. The enzyme catalyses 1-octadecanoyl-2-(5Z,8Z,11Z,14Z-eicosatetraenoyl)-sn-glycero-3-phosphate + CTP + H(+) = 1-octadecanoyl-2-(5Z,8Z,11Z,14Z-eicosatetraenoyl)-sn-glycero-3-cytidine-5'-diphosphate + diphosphate. It catalyses the reaction 1-octadecanoyl-2-(9Z,12Z-octadecadienoyl)-sn-glycero-3-phosphate + CTP + H(+) = 1-octadecanoyl-2-(9Z,12Z-octadecadienoyl)-sn-glycero-3-cytidine-5'-diphosphate + diphosphate. It carries out the reaction 1-hexadecanoyl-2-(5Z,8Z,11Z,14Z-eicosatetraenoyl)-sn-glycero-3-phosphate + CTP + H(+) = 1-hexadecanoyl-2-(5Z,8Z,11Z,14Z-eicosatetraenoyl)-sn-glycero-3-cytidine-5'-diphosphate + diphosphate. The catalysed reaction is 1,2-di-(5Z,8Z,11Z,14Z)-eicosatetraenoyl-sn-glycero-3-phosphate + CTP + H(+) = 1,2-di-(5Z,8Z,11Z,14Z-eicosatetraenoyl)-sn-glycero-3-cytidine-5'-diphosphate + diphosphate. The enzyme catalyses 1-octadecanoyl-2-(9Z-octadecenoyl)-sn-glycero-3-phosphate + CTP + H(+) = 1-octadecanoyl-2-(9Z-octadecenoyl)-sn-glycero-3-cytidine-5'-diphosphate + diphosphate. It catalyses the reaction 1-octadecanoyl-2-(4Z,7Z,10Z,13Z,16Z,19Z-docosahexaenoyl)-sn-glycero-3-phosphate + CTP + H(+) = 1-octadecanoyl-2-(4Z,7Z,10Z,13Z,16Z,19Z-docosahexaenoyl)-sn-glycero-3-cytidine-5'-diphosphate + diphosphate. It carries out the reaction 1,2-di-(9Z,12Z-octadecadienoyl)-sn-glycero-3-phosphate + CTP + H(+) = 1,2-di-(9Z,12Z-octadecadienoyl)-sn-glycero-3-cytidine-5'-diphosphate + diphosphate. The catalysed reaction is 1,2-di-(9Z-octadecenoyl)-sn-glycero-3-phosphate + CTP + H(+) = 1,2-di-(9Z-octadecenoyl)-sn-glycero-3-cytidine-5'-diphosphate + diphosphate. Its pathway is phospholipid metabolism; CDP-diacylglycerol biosynthesis; CDP-diacylglycerol from sn-glycerol 3-phosphate: step 3/3. Functionally, catalyzes the conversion of phosphatidic acid (PA) to CDP-diacylglycerol (CDP-DAG), an essential intermediate in the synthesis of phosphatidylglycerol, cardiolipin and phosphatidylinositol. Exhibits almost no acyl chain preference for PA, showing no discrimination for the sn-1/sn-2 acyl chain composition of PAs. Plays an important role in regulating the growth of lipid droplets which are storage organelles at the center of lipid and energy homeostasis. Positively regulates the differentiation and development of adipocytes. The sequence is that of Phosphatidate cytidylyltransferase 1 from Mus musculus (Mouse).